The following is a 729-amino-acid chain: Polyribonucleotide nucleotidyltransferase (729 aa).

Mg(2+) contacts are provided by aspartate 509 and aspartate 515. Positions 575–634 (PRVISVKIPVDKIGEVIGPKGKMINQIQADSGAEITVEDDGTIYIGAVDGPSAESARSAI) constitute a KH domain. The S1 motif domain occupies 646-718 (GERYLGTIVK…SRGKISLSPS (73 aa)).

The protein belongs to the polyribonucleotide nucleotidyltransferase family. The cofactor is Mg(2+).

The protein resides in the cytoplasm. The enzyme catalyses RNA(n+1) + phosphate = RNA(n) + a ribonucleoside 5'-diphosphate. In terms of biological role, involved in mRNA degradation. Catalyzes the phosphorolysis of single-stranded polyribonucleotides processively in the 3'- to 5'-direction. The sequence is that of Polyribonucleotide nucleotidyltransferase from Frankia casuarinae (strain DSM 45818 / CECT 9043 / HFP020203 / CcI3).